The chain runs to 194 residues: Thymidine kinase (194 aa).

ATP-binding positions include 15-22 (GCMFSGKT) and 88-91 (DELH). The active-site Proton acceptor is glutamate 89. Residues cysteine 148, cysteine 151, cysteine 186, and cysteine 189 each contribute to the Zn(2+) site.

It belongs to the thymidine kinase family. As to quaternary structure, homotetramer.

Its subcellular location is the cytoplasm. The enzyme catalyses thymidine + ATP = dTMP + ADP + H(+). This chain is Thymidine kinase, found in Roseiflexus castenholzii (strain DSM 13941 / HLO8).